The sequence spans 247 residues: Cationic trypsin-3 (247 aa).

The signal sequence occupies residues 1-15; it reads MKALIFLAFLGAAVA. The propeptide at 16 to 24 is activation peptide; sequence LPLDDDDDK. Positions 25-245 constitute a Peptidase S1 domain; sequence IVGGYTCQKN…YVNWIQQTVA (221 aa). Disulfide bonds link Cys-31–Cys-161, Cys-49–Cys-65, Cys-133–Cys-234, Cys-140–Cys-207, Cys-172–Cys-186, and Cys-197–Cys-221. His-64 functions as the Charge relay system in the catalytic mechanism. Residues Glu-76, Asn-78, Val-81, and Glu-86 each coordinate Ca(2+). The Charge relay system role is filled by Asp-108. Residue Ser-201 is the Charge relay system of the active site.

The protein belongs to the peptidase S1 family. Ca(2+) is required as a cofactor.

Its subcellular location is the secreted. The protein resides in the extracellular space. It carries out the reaction Preferential cleavage: Arg-|-Xaa, Lys-|-Xaa.. This Rattus norvegicus (Rat) protein is Cationic trypsin-3 (Try3).